The sequence spans 151 residues: MKYQQLENLESGWKWAYLVKKHREGEAITRHIENSAAQDAVEQLMKLESEPVKVLEWIDTHMNMQLATRMKQTIRARRKRHFNAEHQHTRKKSIDLEFLVWQRLAALARRRGNTLSETVVQLIEDAERKEKYQNQMSSLKQDLQDILGKDV.

This sequence belongs to the MatP family. In terms of assembly, homodimer.

Its subcellular location is the cytoplasm. Functionally, required for spatial organization of the terminus region of the chromosome (Ter macrodomain) during the cell cycle. Prevents early segregation of duplicated Ter macrodomains during cell division. Binds specifically to matS, which is a 13 bp signature motif repeated within the Ter macrodomain. In Yersinia enterocolitica serotype O:8 / biotype 1B (strain NCTC 13174 / 8081), this protein is Macrodomain Ter protein.